The following is a 339-amino-acid chain: Ribosomal RNA small subunit methyltransferase C (339 aa).

It belongs to the methyltransferase superfamily. RsmC family. As to quaternary structure, monomer.

It is found in the cytoplasm. It catalyses the reaction guanosine(1207) in 16S rRNA + S-adenosyl-L-methionine = N(2)-methylguanosine(1207) in 16S rRNA + S-adenosyl-L-homocysteine + H(+). Functionally, specifically methylates the guanine in position 1207 of 16S rRNA in the 30S particle. The chain is Ribosomal RNA small subunit methyltransferase C from Aliivibrio fischeri (strain MJ11) (Vibrio fischeri).